The following is a 503-amino-acid chain: Na(+)-translocating NADH-quinone reductase subunit B (503 aa).

4 consecutive transmembrane segments (helical) span residues 55–75 (MILVVVALFPATFSAIWNSGV), 120–142 (IFLPLLIISYSVGGACEVLFAVI), 161–181 (TLPPTIPYWMAALGIAFGVVV), and 186–206 (FGGTGMNILNPALSGRAFLFF). T248 is subject to FMN phosphoryl threonine. 5 consecutive transmembrane segments (helical) span residues 361–381 (TSTFACLLGAIFLIVTGIASW), 387–407 (FGIGAFVTAWLFKIVSILIVG), 417–437 (FFIPAYRQLFLGGLAFGLVFM), 452–472 (WIYGLFIGFMTILIRLINPAY), and 475–495 (GVMLAILLGNVFAPLLDYFAV).

The protein belongs to the NqrB/RnfD family. As to quaternary structure, composed of six subunits; NqrA, NqrB, NqrC, NqrD, NqrE and NqrF. Requires FMN as cofactor.

The protein resides in the cell inner membrane. It catalyses the reaction a ubiquinone + n Na(+)(in) + NADH + H(+) = a ubiquinol + n Na(+)(out) + NAD(+). In terms of biological role, NQR complex catalyzes the reduction of ubiquinone-1 to ubiquinol by two successive reactions, coupled with the transport of Na(+) ions from the cytoplasm to the periplasm. NqrA to NqrE are probably involved in the second step, the conversion of ubisemiquinone to ubiquinol. The chain is Na(+)-translocating NADH-quinone reductase subunit B from Chlamydia felis (strain Fe/C-56) (Chlamydophila felis).